Consider the following 312-residue polypeptide: Malate dehydrogenase (312 aa).

NAD(+)-binding positions include 7–13 (GAAGGIG) and Asp34. The substrate site is built by Arg81 and Arg87. NAD(+) contacts are provided by residues Asn94 and 117 to 119 (ITN). The substrate site is built by Asn119 and Arg153. His177 acts as the Proton acceptor in catalysis. Met227 is a binding site for NAD(+).

It belongs to the LDH/MDH superfamily. MDH type 1 family. In terms of assembly, homodimer.

The enzyme catalyses (S)-malate + NAD(+) = oxaloacetate + NADH + H(+). Its function is as follows. Catalyzes the reversible oxidation of malate to oxaloacetate. This Salmonella dublin (strain CT_02021853) protein is Malate dehydrogenase.